We begin with the raw amino-acid sequence, 309 residues long: Protein FdhE homolog (309 aa).

It belongs to the FdhE family.

The protein localises to the cytoplasm. Necessary for formate dehydrogenase activity. In Cronobacter sakazakii (strain ATCC BAA-894) (Enterobacter sakazakii), this protein is Protein FdhE homolog.